Consider the following 375-residue polypeptide: 4,4'-diaponeurosporenoate glycosyltransferase (375 aa).

The next 4 membrane-spanning stretches (helical) occupy residues 7–23 (LLHA…YLMY), 112–132 (ACYL…DADV), 280–300 (IMML…GLAL), and 333–353 (FSIL…LVYI).

It belongs to the glycosyltransferase 2 family. CrtQ subfamily.

The protein localises to the cell membrane. It participates in carotenoid biosynthesis; staphyloxanthin biosynthesis; staphyloxanthin from farnesyl diphosphate: step 4/5. Its function is as follows. Catalyzes the glycosylation of 4,4'-diaponeurosporenoate, i.e. the esterification of glucose at the C1'' position with the carboxyl group of 4,4'-diaponeurosporenic acid, to form glycosyl-4,4'-diaponeurosporenoate. This is a step in the biosynthesis of staphyloxanthin, an orange pigment present in most staphylococci strains. This Staphylococcus haemolyticus (strain JCSC1435) protein is 4,4'-diaponeurosporenoate glycosyltransferase (crtQ).